A 185-amino-acid polypeptide reads, in one-letter code: Mitochondrial inner membrane protease atp23 (185 aa).

A divalent metal cation is bound at residue histidine 86. Glutamate 87 is an active-site residue. A divalent metal cation is bound at residue histidine 90.

The protein belongs to the peptidase M76 family.

It localises to the mitochondrion inner membrane. Functionally, has a dual role in the assembly of mitochondrial ATPase. Acts as a protease that removes N-terminal residues of mitochondrial ATPase CF(0) subunit 6 at the intermembrane space side. Also involved in the correct assembly of the membrane-embedded ATPase CF(0) particle, probably mediating association of subunit 6 with the subunit 9 ring. The chain is Mitochondrial inner membrane protease atp23 (atp23) from Schizosaccharomyces pombe (strain 972 / ATCC 24843) (Fission yeast).